The sequence spans 204 residues: Recombination protein RecR (204 aa).

The segment at 58–75 (CTICQNITDVGTDPCAIC) adopts a C4-type zinc-finger fold. A Toprim domain is found at 83–181 (TVICVVESPV…AVTKIARGIP (99 aa)).

It belongs to the RecR family.

Its function is as follows. May play a role in DNA repair. It seems to be involved in an RecBC-independent recombinational process of DNA repair. It may act with RecF and RecO. This chain is Recombination protein RecR, found in Chlorobium chlorochromatii (strain CaD3).